Here is a 546-residue protein sequence, read N- to C-terminus: 2-succinyl-5-enolpyruvyl-6-hydroxy-3-cyclohexene-1-carboxylate synthase (546 aa).

Belongs to the TPP enzyme family. MenD subfamily. Homodimer. Mg(2+) serves as cofactor. Mn(2+) is required as a cofactor. It depends on thiamine diphosphate as a cofactor.

It carries out the reaction isochorismate + 2-oxoglutarate + H(+) = 5-enolpyruvoyl-6-hydroxy-2-succinyl-cyclohex-3-ene-1-carboxylate + CO2. The protein operates within quinol/quinone metabolism; 1,4-dihydroxy-2-naphthoate biosynthesis; 1,4-dihydroxy-2-naphthoate from chorismate: step 2/7. It functions in the pathway quinol/quinone metabolism; menaquinone biosynthesis. In terms of biological role, catalyzes the thiamine diphosphate-dependent decarboxylation of 2-oxoglutarate and the subsequent addition of the resulting succinic semialdehyde-thiamine pyrophosphate anion to isochorismate to yield 2-succinyl-5-enolpyruvyl-6-hydroxy-3-cyclohexene-1-carboxylate (SEPHCHC). The chain is 2-succinyl-5-enolpyruvyl-6-hydroxy-3-cyclohexene-1-carboxylate synthase from Mycolicibacterium smegmatis (strain ATCC 700084 / mc(2)155) (Mycobacterium smegmatis).